We begin with the raw amino-acid sequence, 145 residues long: Large ribosomal subunit protein bL19 (145 aa).

Belongs to the bacterial ribosomal protein bL19 family.

In terms of biological role, this protein is located at the 30S-50S ribosomal subunit interface and may play a role in the structure and function of the aminoacyl-tRNA binding site. The chain is Large ribosomal subunit protein bL19 from Brachyspira hyodysenteriae (strain ATCC 49526 / WA1).